A 315-amino-acid chain; its full sequence is Ribosomal RNA small subunit methyltransferase H (315 aa).

Residues 33–35, D52, F84, D106, and Q113 each bind S-adenosyl-L-methionine; that span reads GGH. Residues 290-315 form a disordered region; sequence PITASTSELENNNRSHSAKLRVAEKL. The segment covering 292–304 has biased composition (polar residues); the sequence is TASTSELENNNRS.

Belongs to the methyltransferase superfamily. RsmH family.

The protein localises to the cytoplasm. The enzyme catalyses cytidine(1402) in 16S rRNA + S-adenosyl-L-methionine = N(4)-methylcytidine(1402) in 16S rRNA + S-adenosyl-L-homocysteine + H(+). Its function is as follows. Specifically methylates the N4 position of cytidine in position 1402 (C1402) of 16S rRNA. The sequence is that of Ribosomal RNA small subunit methyltransferase H from Lactobacillus helveticus (strain DPC 4571).